Reading from the N-terminus, the 252-residue chain is tRNA (guanine-N(7)-)-methyltransferase (252 aa).

S-adenosyl-L-methionine-binding residues include Glu80, Glu105, Asp132, and Asp155. Asp155 is an active-site residue. Residues Lys159, Asp191, and 231–234 (TKFE) contribute to the substrate site.

Belongs to the class I-like SAM-binding methyltransferase superfamily. TrmB family.

It carries out the reaction guanosine(46) in tRNA + S-adenosyl-L-methionine = N(7)-methylguanosine(46) in tRNA + S-adenosyl-L-homocysteine. Its pathway is tRNA modification; N(7)-methylguanine-tRNA biosynthesis. Catalyzes the formation of N(7)-methylguanine at position 46 (m7G46) in tRNA. The polypeptide is tRNA (guanine-N(7)-)-methyltransferase (Actinobacillus succinogenes (strain ATCC 55618 / DSM 22257 / CCUG 43843 / 130Z)).